Here is a 609-residue protein sequence, read N- to C-terminus: Glutamine--fructose-6-phosphate aminotransferase [isomerizing] (609 aa).

Residue Cys2 is the Nucleophile; for GATase activity of the active site. The Glutamine amidotransferase type-2 domain maps to 2-218 (CGIVGAIAQR…EGDIAEITRR (217 aa)). SIS domains lie at 286–426 (ADEL…LKGL) and 458–599 (LAED…VDQP). Residue Lys604 is the For Fru-6P isomerization activity of the active site.

In terms of assembly, homodimer.

Its subcellular location is the cytoplasm. It catalyses the reaction D-fructose 6-phosphate + L-glutamine = D-glucosamine 6-phosphate + L-glutamate. Functionally, catalyzes the first step in hexosamine metabolism, converting fructose-6P into glucosamine-6P using glutamine as a nitrogen source. This is Glutamine--fructose-6-phosphate aminotransferase [isomerizing] from Escherichia coli O6:H1 (strain CFT073 / ATCC 700928 / UPEC).